Here is a 211-residue protein sequence, read N- to C-terminus: Thiamine-phosphate synthase (211 aa).

Residues 37 to 41 (QLRIK) and Asn69 each bind 4-amino-2-methyl-5-(diphosphooxymethyl)pyrimidine. Positions 70 and 89 each coordinate Mg(2+). Position 108 (Ser108) interacts with 4-amino-2-methyl-5-(diphosphooxymethyl)pyrimidine. 134-136 (TQT) is a 2-[(2R,5Z)-2-carboxy-4-methylthiazol-5(2H)-ylidene]ethyl phosphate binding site. Lys137 serves as a coordination point for 4-amino-2-methyl-5-(diphosphooxymethyl)pyrimidine. 2-[(2R,5Z)-2-carboxy-4-methylthiazol-5(2H)-ylidene]ethyl phosphate-binding positions include Gly166 and 186–187 (VS).

This sequence belongs to the thiamine-phosphate synthase family. Mg(2+) is required as a cofactor.

It catalyses the reaction 2-[(2R,5Z)-2-carboxy-4-methylthiazol-5(2H)-ylidene]ethyl phosphate + 4-amino-2-methyl-5-(diphosphooxymethyl)pyrimidine + 2 H(+) = thiamine phosphate + CO2 + diphosphate. The catalysed reaction is 2-(2-carboxy-4-methylthiazol-5-yl)ethyl phosphate + 4-amino-2-methyl-5-(diphosphooxymethyl)pyrimidine + 2 H(+) = thiamine phosphate + CO2 + diphosphate. The enzyme catalyses 4-methyl-5-(2-phosphooxyethyl)-thiazole + 4-amino-2-methyl-5-(diphosphooxymethyl)pyrimidine + H(+) = thiamine phosphate + diphosphate. The protein operates within cofactor biosynthesis; thiamine diphosphate biosynthesis; thiamine phosphate from 4-amino-2-methyl-5-diphosphomethylpyrimidine and 4-methyl-5-(2-phosphoethyl)-thiazole: step 1/1. Functionally, condenses 4-methyl-5-(beta-hydroxyethyl)thiazole monophosphate (THZ-P) and 2-methyl-4-amino-5-hydroxymethyl pyrimidine pyrophosphate (HMP-PP) to form thiamine monophosphate (TMP). This is Thiamine-phosphate synthase from Citrobacter koseri (strain ATCC BAA-895 / CDC 4225-83 / SGSC4696).